The sequence spans 355 residues: MRLSSSLIALVALAGQALALPFNELAERDTGLDVKLIPIGNTRVKAIITNNADHEMSFVKYNTLFDSSPVRKVQISKDGSIIPFKGIHLYYDIDNLPKEAYKTLAPGASAEAEFDIAETSDLSAGGSFKISAEGSIPVIDGQGTKPTSSIRFKANTLTMDIDGEMASRVASAIPELNKRTRVDNQTCTGQYAQLLQGGLRTCATYAQRAAQAASGGNAQKFQEYFKTTNQQTRQNVARRFQAIAQECSSANQGRTIYFCQDVYGYCQGAIAYTVPDRSHVVNCPAYWSLPPVLNRGLGPDHGYVIVHEFTHAPSVFSPGTVDHAYGYEQCRRLNAQQSLNNADSYSLFAADVSRN.

Residues 1–19 (MRLSSSLIALVALAGQALA) form the signal peptide. Residues 20–179 (LPFNELAERD…ASAIPELNKR (160 aa)) constitute a propeptide that is removed on maturation. Intrachain disulfides connect Cys187–Cys259 and Cys266–Cys283. Residue His307 participates in Zn(2+) binding. Glu308 is a catalytic residue. Residues His311 and Asp322 each contribute to the Zn(2+) site.

The protein belongs to the peptidase M35 family. Zn(2+) is required as a cofactor.

The protein localises to the secreted. The catalysed reaction is Preferential cleavage of bonds with hydrophobic residues in P1'. Also 3-Asn-|-Gln-4 and 8-Gly-|-Ser-9 bonds in insulin B chain.. In terms of biological role, secreted metalloproteinase that allows assimilation of proteinaceous substrates. Shows high activities on basic nuclear substrates such as histone and protamine. May be involved in virulence. The chain is Neutral protease 2 homolog MEP6 (MEP6) from Coccidioides posadasii (strain C735) (Valley fever fungus).